We begin with the raw amino-acid sequence, 282 residues long: Nucleotide-binding protein in ptsN-ptsO intergenic region (282 aa).

8 to 15 (GRSGSGKS) is an ATP binding site. 56-59 (DVRN) contacts GTP.

It belongs to the RapZ-like family.

Displays ATPase and GTPase activities. This chain is Nucleotide-binding protein in ptsN-ptsO intergenic region, found in Shewanella violacea.